A 350-amino-acid chain; its full sequence is Purine-binding protein BAB2_0673 (350 aa).

A signal peptide spans 1–17 (MVIATVAGFMLGGAAHA). Adenine is bound by residues Trp-36, Trp-185, and Asp-211.

It belongs to the BMP lipoprotein family.

Functionally, binds adenine and probably also other purines, such as guanine. May play a role in adenine and guanine uptake. May be part of an ABC-type uptake system for adenine and similar ligands. This is Purine-binding protein BAB2_0673 from Brucella abortus (strain 2308).